We begin with the raw amino-acid sequence, 120 residues long: Flagellar protein FliT (120 aa).

The required for homodimerization stretch occupies residues 1-50 (MERHQHLLSEYQQILTLSEQMLVLATEGNWDALVDLEMTYLKAVESTANI). The fliD binding stretch occupies residues 60-98 (LQDLLREKLRAILDNEIEIKRLLQLRLDRLSDLVGQSTK).

The protein belongs to the FliT family. In terms of assembly, homodimer. Interacts with FliD and FlhC.

The protein localises to the cytoplasm. It is found in the cytosol. In terms of biological role, dual-function protein that regulates the transcription of class 2 flagellar operons and that also acts as an export chaperone for the filament-capping protein FliD. As a transcriptional regulator, acts as an anti-FlhDC factor; it directly binds FlhC, thus inhibiting the binding of the FlhC/FlhD complex to class 2 promoters, resulting in decreased expression of class 2 flagellar operons. As a chaperone, effects FliD transition to the membrane by preventing its premature polymerization, and by directing it to the export apparatus. This chain is Flagellar protein FliT, found in Yersinia enterocolitica serotype O:8 / biotype 1B (strain NCTC 13174 / 8081).